The following is a 364-amino-acid chain: Aminomethyltransferase (364 aa).

The protein belongs to the GcvT family. The glycine cleavage system is composed of four proteins: P, T, L and H.

It carries out the reaction N(6)-[(R)-S(8)-aminomethyldihydrolipoyl]-L-lysyl-[protein] + (6S)-5,6,7,8-tetrahydrofolate = N(6)-[(R)-dihydrolipoyl]-L-lysyl-[protein] + (6R)-5,10-methylene-5,6,7,8-tetrahydrofolate + NH4(+). Functionally, the glycine cleavage system catalyzes the degradation of glycine. The protein is Aminomethyltransferase of Shewanella baltica (strain OS223).